The chain runs to 31 residues: Cytochrome b6-f complex subunit 6 (31 aa).

The helical transmembrane segment at 4–24 threads the bilayer; it reads ITSYFGFLLVVLTITSALFIG.

It belongs to the PetL family. The 4 large subunits of the cytochrome b6-f complex are cytochrome b6, subunit IV (17 kDa polypeptide, PetD), cytochrome f and the Rieske protein, while the 4 small subunits are PetG, PetL, PetM and PetN. The complex functions as a dimer.

It is found in the plastid. It localises to the chloroplast thylakoid membrane. In terms of biological role, component of the cytochrome b6-f complex, which mediates electron transfer between photosystem II (PSII) and photosystem I (PSI), cyclic electron flow around PSI, and state transitions. PetL is important for photoautotrophic growth as well as for electron transfer efficiency and stability of the cytochrome b6-f complex. The polypeptide is Cytochrome b6-f complex subunit 6 (Jasminum nudiflorum (Winter jasmine)).